Consider the following 469-residue polypeptide: GTPase Der (469 aa).

EngA-type G domains follow at residues 30–193 and 203–376; these read PVLA…PEVA and RRVA…ASWD. GTP contacts are provided by residues 36-43, 83-87, 145-148, 209-216, 256-260, and 321-324; these read GRPNVGKS, DTGGW, NKVD, GKPNVGKS, DTAGL, and NKWD. One can recognise a KH-like domain in the interval 377-459; sequence TRIPTGPLNS…PIRINVRVRE (83 aa).

The protein belongs to the TRAFAC class TrmE-Era-EngA-EngB-Septin-like GTPase superfamily. EngA (Der) GTPase family. As to quaternary structure, associates with the 50S ribosomal subunit.

Functionally, GTPase that plays an essential role in the late steps of ribosome biogenesis. The protein is GTPase Der of Mycobacterium marinum (strain ATCC BAA-535 / M).